The chain runs to 220 residues: Early protein OPG038 (220 aa).

The N-terminal stretch at 1–17 (MVYKLVLLFCIASLGYS) is a signal peptide. Residues Asn49, Asn79, Asn118, and Asn154 are each glycosylated (N-linked (GlcNAc...) asparagine; by host).

This sequence belongs to the orthopoxvirus OPG038 family. In terms of assembly, homooligomer. Interacts with host CD80 and CD86 when secreted. Glycosylated by host.

The protein resides in the host endoplasmic reticulum. It localises to the secreted. Its function is as follows. Plays a role in immune evasion. When secreted, inhibits T-cell activation by preventing the binding of host CD80 and CD86 to soluble CTLA4 and CD28. In the infected cell, may inhibits host NF kappa B activation. In Cynomys gunnisoni (Gunnison's prairie dog), this protein is Early protein OPG038 (OPG038).